Reading from the N-terminus, the 115-residue chain is Ribonuclease P protein component (115 aa).

It belongs to the RnpA family. Consists of a catalytic RNA component (M1 or rnpB) and a protein subunit.

The enzyme catalyses Endonucleolytic cleavage of RNA, removing 5'-extranucleotides from tRNA precursor.. Functionally, RNaseP catalyzes the removal of the 5'-leader sequence from pre-tRNA to produce the mature 5'-terminus. It can also cleave other RNA substrates such as 4.5S RNA. The protein component plays an auxiliary but essential role in vivo by binding to the 5'-leader sequence and broadening the substrate specificity of the ribozyme. The chain is Ribonuclease P protein component from Bacillus cereus (strain B4264).